We begin with the raw amino-acid sequence, 321 residues long: Malate dehydrogenase (321 aa).

Residues 10-15 and D34 contribute to the NAD(+) site; that span reads GGGQIG. Substrate contacts are provided by R83 and R89. NAD(+) contacts are provided by residues N96 and 119 to 121; that span reads ISN. Positions 121 and 152 each coordinate substrate. Residue H176 is the Proton acceptor of the active site.

This sequence belongs to the LDH/MDH superfamily. MDH type 3 family.

It catalyses the reaction (S)-malate + NAD(+) = oxaloacetate + NADH + H(+). Its function is as follows. Catalyzes the reversible oxidation of malate to oxaloacetate. The sequence is that of Malate dehydrogenase from Trichlorobacter lovleyi (strain ATCC BAA-1151 / DSM 17278 / SZ) (Geobacter lovleyi).